Here is a 213-residue protein sequence, read N- to C-terminus: Uracil phosphoribosyltransferase (213 aa).

Residues Arg77, Arg102, and 129 to 137 (DPMLATGGS) each bind 5-phospho-alpha-D-ribose 1-diphosphate. Uracil is bound by residues Ile198 and 203–205 (GDA). Asp204 is a 5-phospho-alpha-D-ribose 1-diphosphate binding site.

It belongs to the UPRTase family. Requires Mg(2+) as cofactor.

The enzyme catalyses UMP + diphosphate = 5-phospho-alpha-D-ribose 1-diphosphate + uracil. It functions in the pathway pyrimidine metabolism; UMP biosynthesis via salvage pathway; UMP from uracil: step 1/1. With respect to regulation, allosterically activated by GTP. Functionally, catalyzes the conversion of uracil and 5-phospho-alpha-D-ribose 1-diphosphate (PRPP) to UMP and diphosphate. In Mycobacteroides abscessus (strain ATCC 19977 / DSM 44196 / CCUG 20993 / CIP 104536 / JCM 13569 / NCTC 13031 / TMC 1543 / L948) (Mycobacterium abscessus), this protein is Uracil phosphoribosyltransferase.